We begin with the raw amino-acid sequence, 304 residues long: MNLMLCCTPLQVLIARKIIELHPNEQFFGVMFGGVWDKKRTLYASKLAEVCSDSMNIDTGKDLKGFDFLKLMRQLKNKITHKGFDKVFLANLNSLWLQTYLSHVSFKELYTFDDGSDNIFPHPNLLREPGTFKYKLIKAFIGDKYSVNKLFKKIKKHYTVYPNYKNIVSNIEPISLWDNQIDCEIDGEVSFFIGQPLLNTKEENISLIKKLKDQIPFDYYFPHPAEDYRVDGVNYVESELIFEDYVFKHLSNKKIIIYTFFSSVAFNLLSHPNVEIRFIRTSIPRWQFCYDSFPDLGLTIYKEI.

Residues 221 to 225 (FPHPA), 242 to 243 (FE), and 262 to 263 (SS) contribute to the CMP-N-acetyl-beta-neuraminate site. The active-site Proton donor is the His-223.

The protein belongs to the glycosyltransferase 52 family.

The enzyme catalyses a beta-D-galactosyl-(1-&gt;4)-N-acetyl-beta-D-glucosaminyl derivative + CMP-N-acetyl-beta-neuraminate = an N-acetyl-alpha-neuraminyl-(2-&gt;3)-beta-D-galactosyl-(1-&gt;4)-N-acetyl-beta-D-glucosaminyl derivative + CMP + H(+). It functions in the pathway bacterial outer membrane biogenesis; lipooligosaccharide biosynthesis. Functionally, catalyzes the transfer of sialic acid from the substrate CMP-N-acetylneuraminate to the terminal galactose residue of the N-acetyllactosamine moiety of surface lipooligosaccharide (LOS). Thus, functions in the sialylation of LOS, which plays a role in the evasion of the host immune response. This is N-acetyllactosaminide alpha-2,3-sialyltransferase from Haemophilus influenzae (strain ATCC 51907 / DSM 11121 / KW20 / Rd).